A 317-amino-acid polypeptide reads, in one-letter code: Acetyl-coenzyme A carboxylase carboxyl transferase subunit alpha (317 aa).

The region spanning 39 to 293 (RLESKAAAAL…EEAIAEGLAG (255 aa)) is the CoA carboxyltransferase C-terminal domain.

Belongs to the AccA family. In terms of assembly, acetyl-CoA carboxylase is a heterohexamer composed of biotin carboxyl carrier protein (AccB), biotin carboxylase (AccC) and two subunits each of ACCase subunit alpha (AccA) and ACCase subunit beta (AccD).

The protein localises to the cytoplasm. It catalyses the reaction N(6)-carboxybiotinyl-L-lysyl-[protein] + acetyl-CoA = N(6)-biotinyl-L-lysyl-[protein] + malonyl-CoA. It participates in lipid metabolism; malonyl-CoA biosynthesis; malonyl-CoA from acetyl-CoA: step 1/1. Functionally, component of the acetyl coenzyme A carboxylase (ACC) complex. First, biotin carboxylase catalyzes the carboxylation of biotin on its carrier protein (BCCP) and then the CO(2) group is transferred by the carboxyltransferase to acetyl-CoA to form malonyl-CoA. This chain is Acetyl-coenzyme A carboxylase carboxyl transferase subunit alpha, found in Methylobacterium sp. (strain 4-46).